The following is a 211-amino-acid chain: Imidazole glycerol phosphate synthase subunit HisH (211 aa).

The Glutamine amidotransferase type-1 domain occupies 3–211 (VVAVIDYEMG…VSQVREKIAA (209 aa)). The Nucleophile role is filled by C81. Active-site residues include H186 and E188.

As to quaternary structure, heterodimer of HisH and HisF.

Its subcellular location is the cytoplasm. The catalysed reaction is 5-[(5-phospho-1-deoxy-D-ribulos-1-ylimino)methylamino]-1-(5-phospho-beta-D-ribosyl)imidazole-4-carboxamide + L-glutamine = D-erythro-1-(imidazol-4-yl)glycerol 3-phosphate + 5-amino-1-(5-phospho-beta-D-ribosyl)imidazole-4-carboxamide + L-glutamate + H(+). It catalyses the reaction L-glutamine + H2O = L-glutamate + NH4(+). It participates in amino-acid biosynthesis; L-histidine biosynthesis; L-histidine from 5-phospho-alpha-D-ribose 1-diphosphate: step 5/9. Functionally, IGPS catalyzes the conversion of PRFAR and glutamine to IGP, AICAR and glutamate. The HisH subunit catalyzes the hydrolysis of glutamine to glutamate and ammonia as part of the synthesis of IGP and AICAR. The resulting ammonia molecule is channeled to the active site of HisF. This Trichormus variabilis (strain ATCC 29413 / PCC 7937) (Anabaena variabilis) protein is Imidazole glycerol phosphate synthase subunit HisH.